The chain runs to 554 residues: Muellerian-inhibiting factor (554 aa).

Positions 1–24 (MQGPHLSPLVLLLATMGAVLQPEA) are cleaved as a signal peptide. The propeptide occupies 25–446 (VENLATNTRG…GREGRGRTGR (422 aa)). N-linked (GlcNAc...) asparagine glycans are attached at residues asparagine 62, asparagine 326, and asparagine 410. 3 disulfide bridges follow: cysteine 456–cysteine 520, cysteine 482–cysteine 551, and cysteine 486–cysteine 553.

The protein belongs to the TGF-beta family. As to quaternary structure, homodimer; disulfide-linked. In terms of processing, preproprotein is proteolytically processed to generate N- and C-terminal cleavage products that homodimerize and associate to form a biologically active non-covalent complex. Binding of the non-covalent complex to AMHRII induces dissociation of the pro-region from the mature C-terminal dimer. The N-terminal portion of the protein, despite having no intrinsic activity, has the role of amplifying the activity of the C-terminus. Expressed in Sertoli cells of fetal testes, and in testes just after birth, but absent in adult testes. In female, AMH is expressed after birth in the granulosa cells of the follicle.

It is found in the secreted. Its function is as follows. Plays an important role in several reproductive functions, including Muellerian duct regression during male fetal sexua,l differentiation and in the adult plays a role in Leydig cell differentiation and function. In female acts as a negative regulator of the primordial to primary follicle transition and decreases FSH sensitivity of growing follicles. Binds to its sole type II receptor, AMHR2 that recruits type I receptors ACVR1 and BMPR1A which subsequently activates the Smad pathway. The sequence is that of Muellerian-inhibiting factor (Amh) from Mus musculus (Mouse).